Consider the following 391-residue polypeptide: Arrestin-C (391 aa).

Residues Ala369–Ser379 show a composition bias toward basic and acidic residues. The tract at residues Ala369 to Ser391 is disordered.

It belongs to the arrestin family. As to quaternary structure, homodimer; disulfide-linked in response to retinal illumination. Interacts with CXCR4; the interaction is dependent on the C-terminal phosphorylation of CXCR4 and modulates the calcium ion mobilization activity of CXCR4. Interacts with GPR84.

It is found in the photoreceptor inner segment. The protein resides in the cell projection. Its subcellular location is the cilium. It localises to the photoreceptor outer segment. Its function is as follows. May play a role in an as yet undefined retina-specific signal transduction. Could bind to photoactivated-phosphorylated red/green opsins. The chain is Arrestin-C (ARR3) from Sus scrofa (Pig).